Consider the following 428-residue polypeptide: Light-independent protochlorophyllide reductase subunit N (428 aa).

Residues Cys16, Cys41, and Cys102 each coordinate [4Fe-4S] cluster.

Belongs to the BchN/ChlN family. In terms of assembly, protochlorophyllide reductase is composed of three subunits; ChlL, ChlN and ChlB. Forms a heterotetramer of two ChlB and two ChlN subunits. [4Fe-4S] cluster serves as cofactor.

It catalyses the reaction chlorophyllide a + oxidized 2[4Fe-4S]-[ferredoxin] + 2 ADP + 2 phosphate = protochlorophyllide a + reduced 2[4Fe-4S]-[ferredoxin] + 2 ATP + 2 H2O. Its pathway is porphyrin-containing compound metabolism; chlorophyll biosynthesis (light-independent). Its function is as follows. Component of the dark-operative protochlorophyllide reductase (DPOR) that uses Mg-ATP and reduced ferredoxin to reduce ring D of protochlorophyllide (Pchlide) to form chlorophyllide a (Chlide). This reaction is light-independent. The NB-protein (ChlN-ChlB) is the catalytic component of the complex. The polypeptide is Light-independent protochlorophyllide reductase subunit N (Synechococcus sp. (strain CC9311)).